We begin with the raw amino-acid sequence, 205 residues long: Ypt/Rab-type GTPase avaA (205 aa).

Residues 17-23 (SGVGKTS), 33-40 (FSGSYKAT), Gly-66, 125-128 (NKID), and 157-159 (SAK) each bind GTP. Positions 37–45 (YKATIGADF) match the Effector region motif. S-geranylgeranyl cysteine attachment occurs at residues Cys-203 and Cys-205. Residue Cys-205 is modified to Cysteine methyl ester.

Belongs to the small GTPase superfamily. Rab family.

With respect to regulation, rab activation is generally mediated by a guanine exchange factor (GEF), while inactivation through hydrolysis of bound GTP is catalyzed by a GTPase activating protein (GAP). In terms of biological role, ypt/Rab-type GTPases are key regulators of membrane trafficking and intracellular vesicular transport. They act as molecular switches that convert between GTP-bound and GDP-bound states, and regulate virtually all steps of membrane traffic from the formation of the transport vesicle at the donor membrane to its fusion at the target membrane. In the GDP-bound state, Ypt proteins are predominantly cytosolic, solubilized through the interaction with a GDP dissociation inhibitor (GDI). In the GTP-bound state, the proteins are membrane bound and interact with specific effector proteins that select cargo, promote vesicle movement, or verify the correct site of fusion. AvaA functions in vacuolar biogenesis. The chain is Ypt/Rab-type GTPase avaA from Emericella nidulans (strain FGSC A4 / ATCC 38163 / CBS 112.46 / NRRL 194 / M139) (Aspergillus nidulans).